A 57-amino-acid chain; its full sequence is UPF0057 membrane protein T23F2.4 (57 aa).

Helical transmembrane passes span Ile3–Phe23 and Ile36–Ala56.

This sequence belongs to the UPF0057 (PMP3) family.

It is found in the membrane. The protein is UPF0057 membrane protein T23F2.4 of Caenorhabditis elegans.